Consider the following 344-residue polypeptide: Uroporphyrinogen decarboxylase (344 aa).

Substrate-binding positions include 26–30 (RQAGR), Asp75, Tyr150, Ser205, and His323.

It belongs to the uroporphyrinogen decarboxylase family. As to quaternary structure, homodimer.

It is found in the cytoplasm. The enzyme catalyses uroporphyrinogen III + 4 H(+) = coproporphyrinogen III + 4 CO2. Its pathway is porphyrin-containing compound metabolism; protoporphyrin-IX biosynthesis; coproporphyrinogen-III from 5-aminolevulinate: step 4/4. Its function is as follows. Catalyzes the decarboxylation of four acetate groups of uroporphyrinogen-III to yield coproporphyrinogen-III. The protein is Uroporphyrinogen decarboxylase of Corynebacterium diphtheriae (strain ATCC 700971 / NCTC 13129 / Biotype gravis).